Here is a 385-residue protein sequence, read N- to C-terminus: Cell division protein FtsZ (385 aa).

GTP is bound by residues 37–41 (GGGSN), 125–127 (GTG), E156, K160, and D204.

It belongs to the FtsZ family. In terms of assembly, homodimer. Polymerizes to form a dynamic ring structure in a strictly GTP-dependent manner. Interacts directly with several other division proteins.

The protein localises to the cytoplasm. Its function is as follows. Essential cell division protein that forms a contractile ring structure (Z ring) at the future cell division site. The regulation of the ring assembly controls the timing and the location of cell division. One of the functions of the FtsZ ring is to recruit other cell division proteins to the septum to produce a new cell wall between the dividing cells. Binds GTP and shows GTPase activity. In Helicobacter pylori (strain J99 / ATCC 700824) (Campylobacter pylori J99), this protein is Cell division protein FtsZ.